The sequence spans 539 residues: CTP synthase (539 aa).

The tract at residues 1–268 (MADTKYIFVT…DETVLRKVGL (268 aa)) is amidoligase domain. CTP is bound at residue Ser-15. Ser-15 lines the UTP pocket. Position 16–21 (16–21 (SLGKGI)) interacts with ATP. L-glutamine is bound at residue Tyr-56. Position 73 (Asp-73) interacts with ATP. Mg(2+) contacts are provided by Asp-73 and Glu-143. CTP contacts are provided by residues 150–152 (DIE), 189–194 (KTKPTQ), and Lys-225. UTP contacts are provided by residues 189 to 194 (KTKPTQ) and Lys-225. Residues 294 to 536 (TIALVGKYVE…IREAIKTRKK (243 aa)) enclose the Glutamine amidotransferase type-1 domain. Gly-356 provides a ligand contact to L-glutamine. The active-site Nucleophile; for glutamine hydrolysis is Cys-383. L-glutamine is bound by residues 384–387 (LGMQ), Glu-407, and Arg-464. Residues His-509 and Glu-511 contribute to the active site.

The protein belongs to the CTP synthase family. In terms of assembly, homotetramer.

It carries out the reaction UTP + L-glutamine + ATP + H2O = CTP + L-glutamate + ADP + phosphate + 2 H(+). The catalysed reaction is L-glutamine + H2O = L-glutamate + NH4(+). The enzyme catalyses UTP + NH4(+) + ATP = CTP + ADP + phosphate + 2 H(+). Its pathway is pyrimidine metabolism; CTP biosynthesis via de novo pathway; CTP from UDP: step 2/2. Its activity is regulated as follows. Allosterically activated by GTP, when glutamine is the substrate; GTP has no effect on the reaction when ammonia is the substrate. The allosteric effector GTP functions by stabilizing the protein conformation that binds the tetrahedral intermediate(s) formed during glutamine hydrolysis. Inhibited by the product CTP, via allosteric rather than competitive inhibition. Its function is as follows. Catalyzes the ATP-dependent amination of UTP to CTP with either L-glutamine or ammonia as the source of nitrogen. Regulates intracellular CTP levels through interactions with the four ribonucleotide triphosphates. In Porphyromonas gingivalis (strain ATCC 33277 / DSM 20709 / CIP 103683 / JCM 12257 / NCTC 11834 / 2561), this protein is CTP synthase.